Consider the following 375-residue polypeptide: MICPVIDLAQQLIKRPSLSPNDAGCQEIMIQRLEAIGFTVEPMNFGDTLNFWAWRGEGETLAFAGHTDVVPTGDESHWCSPPFEPTIRDGMLYGRGAADMKGSLAAMVVAAERFVAAHPNHKGRLAFMITSDEEAKAINGTVKVVNALMARHERLDYCLVGEPSSTDRVGDVVKNGRRGSITANLHIHGIQGHVAYPHLADNPVHRAIPALNELVTTQWDEGNEFFPATSMQIANLHAGTGSNNVIPGEFYVQFNFRFSTELTDSMIKQRVEALLERHQLDYTLEWVLSGQPFLTARGALVDAVVNAVEHYAEITPQLLTTGGTSDGRFIALMGAQVVELGPVNATIHKVNECVHAADLQLLSRMYQKIMEQLIA.

Position 66 (histidine 66) interacts with Zn(2+). Residue aspartate 68 is part of the active site. Position 99 (aspartate 99) interacts with Zn(2+). Residue glutamate 133 is the Proton acceptor of the active site. Zn(2+)-binding residues include glutamate 134, glutamate 162, and histidine 348.

It belongs to the peptidase M20A family. DapE subfamily. As to quaternary structure, homodimer. Zn(2+) serves as cofactor. Requires Co(2+) as cofactor.

The catalysed reaction is N-succinyl-(2S,6S)-2,6-diaminopimelate + H2O = (2S,6S)-2,6-diaminopimelate + succinate. Its pathway is amino-acid biosynthesis; L-lysine biosynthesis via DAP pathway; LL-2,6-diaminopimelate from (S)-tetrahydrodipicolinate (succinylase route): step 3/3. Catalyzes the hydrolysis of N-succinyl-L,L-diaminopimelic acid (SDAP), forming succinate and LL-2,6-diaminopimelate (DAP), an intermediate involved in the bacterial biosynthesis of lysine and meso-diaminopimelic acid, an essential component of bacterial cell walls. The chain is Succinyl-diaminopimelate desuccinylase from Yersinia enterocolitica serotype O:8 / biotype 1B (strain NCTC 13174 / 8081).